The following is a 144-amino-acid chain: Protein CT_635 (144 aa).

The segment at 110–144 is disordered; that stretch reads EVTNDIGHSSHKSPTPKKTKSSSQKKSKKKNWIPL. Basic residues predominate over residues 118–144; sequence SSHKSPTPKKTKSSSQKKSKKKNWIPL.

Belongs to the chlamydial CPn_0742/CT_635/TC_0003 family.

The protein is Protein CT_635 of Chlamydia trachomatis serovar D (strain ATCC VR-885 / DSM 19411 / UW-3/Cx).